The primary structure comprises 192 residues: GTP cyclohydrolase 1 (192 aa).

Zn(2+)-binding residues include Cys82, His85, and Cys153.

Belongs to the GTP cyclohydrolase I family. In terms of assembly, toroid-shaped homodecamer, composed of two pentamers of five dimers.

The enzyme catalyses GTP + H2O = 7,8-dihydroneopterin 3'-triphosphate + formate + H(+). It functions in the pathway cofactor biosynthesis; 7,8-dihydroneopterin triphosphate biosynthesis; 7,8-dihydroneopterin triphosphate from GTP: step 1/1. The sequence is that of GTP cyclohydrolase 1 from Rickettsia bellii (strain OSU 85-389).